A 255-amino-acid chain; its full sequence is Protein YIPF7 (255 aa).

At 1–124 (MSNLGQFDSD…ADGSIMNETD (124 aa)) the chain is on the cytoplasmic side. The helical transmembrane segment at 125 to 145 (LTGPILFCMALGATLLLAGKV) threads the bilayer. Position 146 (Gln-146) is a topological domain, lumenal. Residues 147–167 (FGYVYGMSAIGCLGIHALLNL) traverse the membrane as a helical segment. At 168-180 (MSSSGVSYGCVAS) the chain is on the cytoplasmic side. A helical transmembrane segment spans residues 181–201 (VLGYCLLPMVILSSCAIFFSL). At 202–204 (QGT) the chain is on the lumenal side. A helical membrane pass occupies residues 205–225 (FGTVSALVIIGWCSLSASKIF). The Cytoplasmic portion of the chain corresponds to 226–234 (TSALAMEGQ). Residues 235–255 (QLLIAYPCALLYGLFALVTVF) traverse the membrane as a helical segment.

This sequence belongs to the YIP1 family.

The protein localises to the endoplasmic reticulum membrane. It localises to the golgi apparatus. Its subcellular location is the cis-Golgi network membrane. It is found in the trans-Golgi network membrane. The polypeptide is Protein YIPF7 (YIPF7) (Bos taurus (Bovine)).